The chain runs to 191 residues: Signal peptidase complex catalytic subunit sec11 (191 aa).

Over 1–14 (MLSFLSSNISNARQ) the chain is Cytoplasmic. Residues 15 to 33 (TLAQVLNFALVLSSAFMMW) form a helical; Signal-anchor for type II membrane protein membrane-spanning segment. The Lumenal portion of the chain corresponds to 34 to 191 (KGLSVFTGSS…MGVMVMLQRE (158 aa)). Active-site charge relay system residues include S53, H92, and D133. The segment at 177-188 (VLLGIMGVMVML) is C-terminal short (CTS) helix.

Belongs to the peptidase S26B family. As to quaternary structure, component of the signal peptidase complex (SPC) composed of a catalytic subunit SEC11 and three accessory subunits SPC1, SPC2 and SPC3. The complex induces a local thinning of the ER membrane which is used to measure the length of the signal peptide (SP) h-region of protein substrates. This ensures the selectivity of the complex towards h-regions shorter than 18-20 amino acids. SPC associates with the translocon complex.

It localises to the endoplasmic reticulum membrane. It carries out the reaction Cleavage of hydrophobic, N-terminal signal or leader sequences from secreted and periplasmic proteins.. Catalytic component of the signal peptidase complex (SPC) which catalyzes the cleavage of N-terminal signal sequences from nascent proteins as they are translocated into the lumen of the endoplasmic reticulum. Specifically cleaves N-terminal signal peptides that contain a hydrophobic alpha-helix (h-region) shorter than 18-20 amino acids. This Aspergillus terreus (strain NIH 2624 / FGSC A1156) protein is Signal peptidase complex catalytic subunit sec11 (sec11).